Here is a 475-residue protein sequence, read N- to C-terminus: LEC14B homolog (475 aa).

The tract at residues 1–34 (MSYRTRFGKDNSACDSGNAVEGSGSSKGPNEVSN) is disordered. Over residues 23 to 33 (SGSSKGPNEVS) the composition is skewed to polar residues. WD repeat units lie at residues 211–240 (DEFG…YVYD), 252–283 (AHSS…KVWD), 299–329 (GHLE…QLWD), 375–411 (GHGV…YIYD), and 423–453 (HHEG…ARWE).

The protein belongs to the WD repeat LEC14B family.

The chain is LEC14B homolog from Prunus armeniaca (Apricot).